Consider the following 89-residue polypeptide: Small ribosomal subunit protein uS15 (89 aa).

This sequence belongs to the universal ribosomal protein uS15 family. Part of the 30S ribosomal subunit. Forms a bridge to the 50S subunit in the 70S ribosome, contacting the 23S rRNA.

Functionally, one of the primary rRNA binding proteins, it binds directly to 16S rRNA where it helps nucleate assembly of the platform of the 30S subunit by binding and bridging several RNA helices of the 16S rRNA. Its function is as follows. Forms an intersubunit bridge (bridge B4) with the 23S rRNA of the 50S subunit in the ribosome. The polypeptide is Small ribosomal subunit protein uS15 (Chelativorans sp. (strain BNC1)).